The chain runs to 229 residues: Probable coenzyme A transferase subunit alpha (229 aa).

A CoA-binding site is contributed by 26–32; it reads GGFGGVG.

It belongs to the 3-oxoacid CoA-transferase subunit A family. As to quaternary structure, heterodimer of a subunit alpha and a subunit beta.

The chain is Probable coenzyme A transferase subunit alpha (yodS) from Bacillus subtilis (strain 168).